Reading from the N-terminus, the 359-residue chain is Dihydroorotate dehydrogenase (quinone) (359 aa).

FMN-binding positions include 68 to 72 (AGFDK) and Thr92. Lys72 provides a ligand contact to substrate. 117–121 (NRMGF) serves as a coordination point for substrate. Residues Asn145 and Asn176 each coordinate FMN. A substrate-binding site is contributed by Asn176. Ser179 serves as the catalytic Nucleophile. Residue Asn181 coordinates substrate. Positions 212 and 240 each coordinate FMN. Residue 241–242 (NT) coordinates substrate. Residues Gly266, Gly295, and 316–317 (YT) each bind FMN.

The protein belongs to the dihydroorotate dehydrogenase family. Type 2 subfamily. As to quaternary structure, monomer. The cofactor is FMN.

It localises to the cell membrane. The enzyme catalyses (S)-dihydroorotate + a quinone = orotate + a quinol. Its pathway is pyrimidine metabolism; UMP biosynthesis via de novo pathway; orotate from (S)-dihydroorotate (quinone route): step 1/1. Functionally, catalyzes the conversion of dihydroorotate to orotate with quinone as electron acceptor. The sequence is that of Dihydroorotate dehydrogenase (quinone) from Corynebacterium striatum.